Here is a 309-residue protein sequence, read N- to C-terminus: UDP-N-acetylenolpyruvoylglucosamine reductase (309 aa).

Residues 34–199 enclose the FAD-binding PCMH-type domain; sequence RVGGPAQVLF…TSARLRGTPA (166 aa). Arg-179 is an active-site residue. Ser-228 acts as the Proton donor in catalysis. Residue Glu-298 is part of the active site.

This sequence belongs to the MurB family. Requires FAD as cofactor.

The protein resides in the cytoplasm. The catalysed reaction is UDP-N-acetyl-alpha-D-muramate + NADP(+) = UDP-N-acetyl-3-O-(1-carboxyvinyl)-alpha-D-glucosamine + NADPH + H(+). Its pathway is cell wall biogenesis; peptidoglycan biosynthesis. Its function is as follows. Cell wall formation. This is UDP-N-acetylenolpyruvoylglucosamine reductase from Rhodopseudomonas palustris (strain ATCC BAA-98 / CGA009).